The sequence spans 877 residues: Probable Ras GTPase-activating-like protein ngap (877 aa).

The C2 domain maps to 72–218 (TPSATYESLI…KDQKERELWF (147 aa)). Residues 350-456 (SDDGDISGLK…ETINLSSSIN (107 aa)) form a disordered region. A compositionally biased stretch (low complexity) spans 389–409 (TTATTTPSSTPSTPISPSSQS). The span at 410 to 425 (NNIKTPDSKTRSSSNA) shows a compositional bias: polar residues. 2 stretches are compositionally biased toward low complexity: residues 426-438 (STNTPQTTPKSTG) and 447-456 (ETINLSSSIN). Residues 591-802 (GKCLYLLKSL…ENMKSFINTL (212 aa)) form the Ras-GAP domain. Residues 820-848 (LEKELACLYRHLIKQRQDMAEEMESTESE) are a coiled coil.

Functionally, may function as a Ras GTPase-activating protein. The polypeptide is Probable Ras GTPase-activating-like protein ngap (ngap) (Dictyostelium discoideum (Social amoeba)).